We begin with the raw amino-acid sequence, 431 residues long: Isochorismate synthase MenF (431 aa).

Catalysis depends on Lys183, which acts as the Proton acceptor. Glu233 serves as the catalytic Proton donor. 2 residues coordinate Mg(2+): Glu277 and Glu414.

This sequence belongs to the isochorismate synthase family. Mg(2+) is required as a cofactor.

It carries out the reaction chorismate = isochorismate. It participates in quinol/quinone metabolism; 1,4-dihydroxy-2-naphthoate biosynthesis; 1,4-dihydroxy-2-naphthoate from chorismate: step 1/7. The protein operates within quinol/quinone metabolism; menaquinone biosynthesis. Its function is as follows. Catalyzes the conversion of chorismate to isochorismate. The polypeptide is Isochorismate synthase MenF (Pasteurella multocida (strain Pm70)).